The sequence spans 122 residues: MIQQESRLRVADNTGAREILCIRVLGGSGRRYAGIGDIIVGTVKDALPGAGVKRGDVVKAVVVRTKKERRRPDGSYIRFDENAAVLIRDGGDPRGTRIFGPVGRELRDKRFMKIISLAPEVL.

Belongs to the universal ribosomal protein uL14 family. Part of the 50S ribosomal subunit. Forms a cluster with proteins L3 and L19. In the 70S ribosome, L14 and L19 interact and together make contacts with the 16S rRNA in bridges B5 and B8.

In terms of biological role, binds to 23S rRNA. Forms part of two intersubunit bridges in the 70S ribosome. This Parafrankia sp. (strain EAN1pec) protein is Large ribosomal subunit protein uL14.